An 821-amino-acid polypeptide reads, in one-letter code: TORTIFOLIA1-like protein 1 (821 aa).

HEAT repeat units follow at residues 69–110, 114–151, 163–201, 205–242, and 245–282; these read PDSP…SYTD, SQLA…QFLK, SSLV…SATE, AAFQ…VGAI, and QSLE…HSSS. Ser-406 bears the Phosphoserine mark. Disordered stretches follow at residues 416–437 and 553–610; these read PSRQ…NTSV and MSIQ…RAWD. The stretch at 501–554 forms a coiled coil; the sequence is PPLQRQLLHLERQQTHIMNMLQDFMGGSHDGMISLENRVRGLERIVEEMSREMS. The span at 579–590 shows a compositional bias: polar residues; sequence YGPSSRNTQTST.

As to expression, expressed at low levels in roots, hypocotyls, stems, flowers, siliques, cotyledons, and leaves. Particularly present in hydathodes of cotyledons and root hairs.

Its subcellular location is the cytoplasm. The protein resides in the cytoskeleton. Plant-specific microtubule-associated protein (MAP) that regulates the orientation of cortical microtubules and the direction of organ growth. The chain is TORTIFOLIA1-like protein 1 from Arabidopsis thaliana (Mouse-ear cress).